Here is a 799-residue protein sequence, read N- to C-terminus: Pentatricopeptide repeat-containing protein At2g26790, mitochondrial (799 aa).

The N-terminal 27 residues, 1–27, are a transit peptide targeting the mitochondrion; that stretch reads MRFSPTFFLLSQLRLTRRRAATSSRFY. PPR repeat units follow at residues 145 to 179, 180 to 214, 215 to 250, 251 to 278, 282 to 316, 317 to 351, 352 to 386, 387 to 421, 422 to 456, 457 to 491, 492 to 522, 523 to 553, 555 to 589, 590 to 624, 625 to 659, 660 to 695, 708 to 742, and 743 to 777; these read LIRV…DCVV, DIKA…GLCA, NEYT…GYKT, FING…KYLA, LRAV…GFGL, DVYA…GLKV, NCVI…NIFL, DRVC…GIVP, DVIN…GMSP, DLIT…GPKP, NAVT…LEQK, CPEN…LEYP, RKSV…RVEP, GRSM…GLIP, DLFT…GIKP, DVVT…KASE, DVVC…GLEP, and DMVA…YNIP.

This sequence belongs to the PPR family. P subfamily.

The protein resides in the mitochondrion. This chain is Pentatricopeptide repeat-containing protein At2g26790, mitochondrial, found in Arabidopsis thaliana (Mouse-ear cress).